We begin with the raw amino-acid sequence, 241 residues long: Dolichol-phosphate mannosyltransferase subunit 1 (241 aa).

Residues Pro13, Tyr15, Glu17, Ile44, Asp46, Asp99, Ala100, Asp101, Arg128, Arg215, and Lys221 each contribute to the GDP-alpha-D-mannose site. Residue Asp101 coordinates Mg(2+). Asp101 contributes to the Mn(2+) binding site.

This sequence belongs to the glycosyltransferase 2 family. It depends on Mg(2+) as a cofactor. The cofactor is Mn(2+). Ca(2+) is required as a cofactor.

The protein localises to the endoplasmic reticulum. The enzyme catalyses a di-trans,poly-cis-dolichyl phosphate + GDP-alpha-D-mannose = a di-trans,poly-cis-dolichyl beta-D-mannosyl phosphate + GDP. The protein operates within protein modification; protein glycosylation. Its function is as follows. Transfers mannose from GDP-mannose to dolichol monophosphate to form dolichol phosphate mannose (Dol-P-Man) which is the mannosyl donor in pathways leading to N-glycosylation, glycosyl phosphatidylinositol membrane anchoring, and O-mannosylation of proteins. The chain is Dolichol-phosphate mannosyltransferase subunit 1 from Drosophila melanogaster (Fruit fly).